A 221-amino-acid polypeptide reads, in one-letter code: Serine/arginine-rich splicing factor 2 (221 aa).

N-acetylserine is present on Ser-2. At Ser-2 the chain carries Phosphoserine. One can recognise an RRM domain in the interval 14–92 (TSLKVDNLTY…RELRVQMARY (79 aa)). 2 positions are modified to phosphothreonine: Thr-22 and Thr-25. A Phosphoserine modification is found at Ser-26. Lys-52 is subject to N6-acetyllysine. The tract at residues 92 to 221 (YGRPPDSHHS…SPEEEGAVSS (130 aa)) is disordered. Basic residues-rich tracts occupy residues 117-171 (RRSR…RSKS) and 179-189 (SRSRSRSRSRS). Phosphoserine occurs at positions 189, 191, 204, 206, 208, 212, and 220.

Belongs to the splicing factor SR family. As to quaternary structure, in vitro, self-associates and binds SRSF1/SFRS1 (ASF/SF2), SNRNP70 and U2AF1 but not U2AF2. Binds SREK1/SFRS12. Interacts with CCNL1 and CCNL2. Interacts with SCAF11. Interacts with ZRSR2/U2AF1-RS2. Interacts with CCDC55 (via C-terminus). Interacts with BRDT. Extensively phosphorylated on serine residues in the RS domain. Phosphorylated by SRPK2 and this causes its redistribution from the nuclear speckle to nucleoplasm and controls cell fate decision in response to cisplatin treatment. KAT5/TIP60 inhibits its phosphorylation by preventing SRPK2 nuclear translocation. Post-translationally, acetylation on Lys-52 by KAT5/TIP60 promotes its proteasomal degradation. This effect is counterbalanced by HDAC6, which positively controls SRSF2 protein level by deacetylating it and preventing its proteasomal degradation.

It is found in the nucleus. The protein localises to the nucleoplasm. It localises to the nucleus speckle. In terms of biological role, necessary for the splicing of pre-mRNA. It is required for formation of the earliest ATP-dependent splicing complex and interacts with spliceosomal components bound to both the 5'- and 3'-splice sites during spliceosome assembly. It also is required for ATP-dependent interactions of both U1 and U2 snRNPs with pre-mRNA. Interacts with other spliceosomal components, via the RS domains, to form a bridge between the 5'- and 3'-splice site binding components, U1 snRNP and U2AF. Binds to purine-rich RNA sequences, either 5'-AGSAGAGTA-3' (S=C or G) or 5'-GTTCGAGTA-3'. Can bind to beta-globin mRNA and commit it to the splicing pathway. The phosphorylated form (by SRPK2) is required for cellular apoptosis in response to cisplatin treatment. This is Serine/arginine-rich splicing factor 2 (SRSF2) from Sus scrofa (Pig).